The chain runs to 771 residues: Heat shock transcription factor (771 aa).

The tract at residues 1–70 is disordered; sequence MTTNLYAIAG…GIGISKPGLS (70 aa). Low complexity-rich tracts occupy residues 11-23 and 31-42; these read PSKP…TPSP and LKSLTSLPTNPL. Over residues 43–62 the composition is skewed to polar residues; it reads NPQGTSTSNALTNQSSSTGI. A DNA-binding region spans residues 78-168; sequence MKVPAFLNKL…PIELWEFANP (91 aa). Residues 183 to 266 form a disordered region; the sequence is RKNNRLSNSG…PPSHTSAGPL (84 aa). 2 stretches are compositionally biased toward low complexity: residues 189–199 and 212–233; these read SNSGVGSSSSL and SASA…ISQG. The segment covering 238–262 has biased composition (polar residues); that stretch reads NHSTSGKYLITDGTTPGSAPPSHTS. Positions 280–333 are involved in trimerization; sequence GIAAIRQTQASIATDLRKLQASNEALWRQAYETQEKQRKHEETIDLIVSFLERL. Composition is skewed to basic and acidic residues over residues 350–372 and 399–415; these read RGVG…ARFA and TGEH…DRLV. Disordered regions lie at residues 350 to 513, 590 to 634, and 708 to 771; these read RGVG…SSNA, QALT…GSGT, and SGVG…SGLK. Residues 418–448 are compositionally biased toward polar residues; it reads GSNSEYSIPSVKRTSSSSHPLSLGQLGSSRF. 2 stretches are compositionally biased toward low complexity: residues 497 to 511 and 599 to 620; these read LSPL…PSSS and HNPS…SASA.

The protein belongs to the HSF family. As to quaternary structure, homotrimer. Homotrimerization increases the affinity of HSF1 to DNA. Interacts with transcriptional coregulator SSA1 on chromatin. In terms of processing, phosphorylated at high temperature.

The protein resides in the nucleus. DNA-binding transcription factor that specifically binds heat shock promoter elements (HSE) and activates transcription. Promotes thermotolerance by transiently regulating a subset of genes. Induces expression of STI, SSA1, SSA2, HSP78 and KAR2 during the heat response. This is Heat shock transcription factor from Cryptococcus neoformans var. grubii serotype A (strain H99 / ATCC 208821 / CBS 10515 / FGSC 9487) (Filobasidiella neoformans var. grubii).